The primary structure comprises 261 residues: Transcription antitermination protein NusB (261 aa).

Residues 168 to 261 (ARVEDQPSDD…DLHKKDTTDD (94 aa)) form a disordered region. Residues 217–228 (VDTTSGNASDPE) show a composition bias toward polar residues. Over residues 242-261 (PTSKDHELATDLHKKDTTDD) the composition is skewed to basic and acidic residues.

The protein belongs to the NusB family.

Its function is as follows. Involved in transcription antitermination. Required for transcription of ribosomal RNA (rRNA) genes. Binds specifically to the boxA antiterminator sequence of the ribosomal RNA (rrn) operons. The sequence is that of Transcription antitermination protein NusB from Cutibacterium acnes (strain DSM 16379 / KPA171202) (Propionibacterium acnes).